We begin with the raw amino-acid sequence, 184 residues long: NADH-quinone oxidoreductase subunit B (184 aa).

Positions 37, 38, 103, and 132 each coordinate [4Fe-4S] cluster.

Belongs to the complex I 20 kDa subunit family. As to quaternary structure, NDH-1 is composed of 14 different subunits. Subunits NuoB, C, D, E, F, and G constitute the peripheral sector of the complex. [4Fe-4S] cluster serves as cofactor.

It is found in the cell membrane. The catalysed reaction is a quinone + NADH + 5 H(+)(in) = a quinol + NAD(+) + 4 H(+)(out). Its function is as follows. NDH-1 shuttles electrons from NADH, via FMN and iron-sulfur (Fe-S) centers, to quinones in the respiratory chain. The immediate electron acceptor for the enzyme in this species is believed to be a menaquinone. Couples the redox reaction to proton translocation (for every two electrons transferred, four hydrogen ions are translocated across the cytoplasmic membrane), and thus conserves the redox energy in a proton gradient. The polypeptide is NADH-quinone oxidoreductase subunit B (Rhodococcus opacus (strain B4)).